The following is a 594-amino-acid chain: Adenine deaminase 1 (594 aa).

The protein belongs to the metallo-dependent hydrolases superfamily. Adenine deaminase family. Mn(2+) is required as a cofactor.

It catalyses the reaction adenine + H2O + H(+) = hypoxanthine + NH4(+). In Latilactobacillus sakei subsp. sakei (strain 23K) (Lactobacillus sakei subsp. sakei), this protein is Adenine deaminase 1.